The sequence spans 384 residues: Histidinol-phosphate aminotransferase (384 aa).

Lysine 223 is subject to N6-(pyridoxal phosphate)lysine.

Belongs to the class-II pyridoxal-phosphate-dependent aminotransferase family. Pyridoxal 5'-phosphate serves as cofactor.

It carries out the reaction L-histidinol phosphate + 2-oxoglutarate = 3-(imidazol-4-yl)-2-oxopropyl phosphate + L-glutamate. Its pathway is amino-acid biosynthesis; L-histidine biosynthesis; L-histidine from 5-phospho-alpha-D-ribose 1-diphosphate: step 7/9. This chain is Histidinol-phosphate aminotransferase (his3), found in Schizosaccharomyces pombe (strain 972 / ATCC 24843) (Fission yeast).